The primary structure comprises 119 residues: UPF0231 protein YPTB0717 (119 aa).

It belongs to the UPF0231 family.

The polypeptide is UPF0231 protein YPTB0717 (Yersinia pseudotuberculosis serotype I (strain IP32953)).